The following is a 608-amino-acid chain: Myosin light chain kinase 2, skeletal/cardiac muscle (608 aa).

Residues 1–160 (MATENGAVEL…RGSPAFLHSP (160 aa)) form a disordered region. Ala-2 carries the post-translational modification N-acetylalanine. Basic and acidic residues-rich tracts occupy residues 31–43 (AAEK…DPEK) and 50–63 (TKQD…KKDA). The span at 82-91 (GSQGPAGEGG) shows a compositional bias: gly residues. The span at 116–127 (ASEKKPEAEKGP) shows a compositional bias: basic and acidic residues. A phosphoserine mark is found at Ser-153, Ser-159, and Ser-161. Residues 214-235 (QKEAGEKAPGQADQAKVQGDTS) are disordered. Positions 297 to 552 (MNSKEALGGG…AAQCLAHPWL (256 aa)) constitute a Protein kinase domain. ATP is bound by residues 303 to 311 (LGGGKFGAV) and Lys-326. Asp-418 acts as the Proton acceptor in catalysis. Residue Thr-457 is modified to Phosphothreonine. The tract at residues 586-598 (IAVSAANRFKKIS) is calmodulin-binding.

This sequence belongs to the protein kinase superfamily. CAMK Ser/Thr protein kinase family. As to quaternary structure, may interact with centrin.

It localises to the cytoplasm. It catalyses the reaction L-seryl-[myosin light chain] + ATP = O-phospho-L-seryl-[myosin light chain] + ADP + H(+). The catalysed reaction is L-threonyl-[myosin light chain] + ATP = O-phospho-L-threonyl-[myosin light chain] + ADP + H(+). Its function is as follows. Implicated in the level of global muscle contraction and cardiac function. Phosphorylates a specific serine in the N-terminus of a myosin light chain. The polypeptide is Myosin light chain kinase 2, skeletal/cardiac muscle (MYLK2) (Oryctolagus cuniculus (Rabbit)).